The chain runs to 158 residues: Transcription elongation factor GreA (158 aa).

Belongs to the GreA/GreB family.

Its function is as follows. Necessary for efficient RNA polymerase transcription elongation past template-encoded arresting sites. The arresting sites in DNA have the property of trapping a certain fraction of elongating RNA polymerases that pass through, resulting in locked ternary complexes. Cleavage of the nascent transcript by cleavage factors such as GreA or GreB allows the resumption of elongation from the new 3'terminus. GreA releases sequences of 2 to 3 nucleotides. The protein is Transcription elongation factor GreA of Macrococcus caseolyticus (strain JCSC5402) (Macrococcoides caseolyticum).